Here is a 436-residue protein sequence, read N- to C-terminus: APO protein 1, chloroplastic (436 aa).

The N-terminal 47 residues, 1–47 (MLLVSPACRGVYLQTIDPKPIDFSARASYALCFQIPTSIPKRECLMR), are a transit peptide targeting the chloroplast. 2 consecutive APO domains span residues 155-240 (ACSE…EIPE) and 329-414 (ACGY…RVPQ).

It belongs to the APO family. Expressed at low level. Expressed at higher level in leaves. Expressed at lower level in roots, stems, siliques and flowers.

The protein localises to the plastid. The protein resides in the chloroplast. Its function is as follows. Involved in the stable assembly of several 4Fe-4S cluster-containing complexes of chloroplasts. May participate in 4Fe-4S cofactor incorporation into psaA and/or psaB during translation. The protein is APO protein 1, chloroplastic (APO1) of Arabidopsis thaliana (Mouse-ear cress).